The primary structure comprises 145 residues: MSSRREGRELALQALYSSDVEVMDGTTVLKRIMENFGDGSEPAVDAHSRSFSFAAELVNGVVANRAAIDQRIEEKSKNWSISRMARVDLNILRLAVFELFYRPDIPKNVTINEAIEVAKKFGADDSPAFINGILDEIASLLPDKE.

It belongs to the NusB family.

Functionally, involved in transcription antitermination. Required for transcription of ribosomal RNA (rRNA) genes. Binds specifically to the boxA antiterminator sequence of the ribosomal RNA (rrn) operons. The protein is Transcription antitermination protein NusB of Geotalea uraniireducens (strain Rf4) (Geobacter uraniireducens).